Reading from the N-terminus, the 107-residue chain is Putative antitoxin VapB5 (107 aa).

2 consecutive transmembrane segments (helical) span residues 3-23 (GPVI…ILLA) and 65-85 (LIIL…AYLY).

Its subcellular location is the cell membrane. In terms of biological role, possibly the antitoxin component of a type II toxin-antitoxin (TA) system. Its cognate toxin is VapC5 (Potential). This chain is Putative antitoxin VapB5 (vapB5), found in Methanocaldococcus jannaschii (strain ATCC 43067 / DSM 2661 / JAL-1 / JCM 10045 / NBRC 100440) (Methanococcus jannaschii).